We begin with the raw amino-acid sequence, 481 residues long: Pyruvate kinase (481 aa).

Arg-33 provides a ligand contact to substrate. Asn-35, Ser-37, Asp-67, and Thr-68 together coordinate K(+). 35-38 (NFSH) serves as a coordination point for ATP. 2 residues coordinate ATP: Arg-74 and Lys-155. Glu-221 lines the Mg(2+) pocket. The substrate site is built by Gly-244, Asp-245, and Thr-277. Asp-245 is a Mg(2+) binding site.

Belongs to the pyruvate kinase family. In terms of assembly, homotetramer. Requires Mg(2+) as cofactor. K(+) is required as a cofactor.

The enzyme catalyses pyruvate + ATP = phosphoenolpyruvate + ADP + H(+). The protein operates within carbohydrate degradation; glycolysis; pyruvate from D-glyceraldehyde 3-phosphate: step 5/5. This is Pyruvate kinase (pyk) from Chlamydia muridarum (strain MoPn / Nigg).